The chain runs to 218 residues: Epoxyqueuosine reductase QueH (218 aa).

Residues C22, C23, C101, and C104 each coordinate [4Fe-4S] cluster. A disulfide bond links C184 and C186.

It belongs to the QueH family.

It catalyses the reaction epoxyqueuosine(34) in tRNA + AH2 = queuosine(34) in tRNA + A + H2O. It functions in the pathway tRNA modification; tRNA-queuosine biosynthesis. Its function is as follows. Catalyzes the conversion of epoxyqueuosine (oQ) to queuosine (Q), which is a hypermodified base found in the wobble positions of tRNA(Asp), tRNA(Asn), tRNA(His) and tRNA(Tyr). The protein is Epoxyqueuosine reductase QueH of Acinetobacter baylyi (strain ATCC 33305 / BD413 / ADP1).